Here is a 180-residue protein sequence, read N- to C-terminus: Bifunctional protein PyrR (180 aa).

Residues 101–113 (VILIDDVLFTGRT) carry the PRPP-binding motif.

This sequence belongs to the purine/pyrimidine phosphoribosyltransferase family. PyrR subfamily. In terms of assembly, homodimer and homohexamer; in equilibrium.

The enzyme catalyses UMP + diphosphate = 5-phospho-alpha-D-ribose 1-diphosphate + uracil. Functionally, regulates transcriptional attenuation of the pyrimidine nucleotide (pyr) operon by binding in a uridine-dependent manner to specific sites on pyr mRNA. This disrupts an antiterminator hairpin in the RNA and favors formation of a downstream transcription terminator, leading to a reduced expression of downstream genes. Its function is as follows. Also displays a weak uracil phosphoribosyltransferase activity which is not physiologically significant. The polypeptide is Bifunctional protein PyrR (Oceanobacillus iheyensis (strain DSM 14371 / CIP 107618 / JCM 11309 / KCTC 3954 / HTE831)).